A 394-amino-acid chain; its full sequence is Cobalt-precorrin-5B C(1)-methyltransferase (394 aa).

It belongs to the CbiD family.

The enzyme catalyses Co-precorrin-5B + S-adenosyl-L-methionine = Co-precorrin-6A + S-adenosyl-L-homocysteine. Its pathway is cofactor biosynthesis; adenosylcobalamin biosynthesis; cob(II)yrinate a,c-diamide from sirohydrochlorin (anaerobic route): step 6/10. Catalyzes the methylation of C-1 in cobalt-precorrin-5B to form cobalt-precorrin-6A. The polypeptide is Cobalt-precorrin-5B C(1)-methyltransferase (Clostridium beijerinckii (strain ATCC 51743 / NCIMB 8052) (Clostridium acetobutylicum)).